The sequence spans 83 residues: Apolipoprotein C-I (83 aa).

The signal sequence occupies residues 1-26 (MRLILSLPVLAVVLAMVLEGPAPAQA).

This sequence belongs to the apolipoprotein C1 family.

It localises to the secreted. Inhibitor of lipoprotein binding to the low density lipoprotein (LDL) receptor, LDL receptor-related protein, and very low density lipoprotein (VLDL) receptor. Associates with high density lipoproteins (HDL) and the triacylglycerol-rich lipoproteins in the plasma and makes up about 10% of the protein of the VLDL and 2% of that of HDL. Appears to interfere directly with fatty acid uptake and is also the major plasma inhibitor of cholesteryl ester transfer protein (CETP). Binds free fatty acids and reduces their intracellular esterification. Modulates the interaction of APOE with beta-migrating VLDL and inhibits binding of beta-VLDL to the LDL receptor-related protein. This chain is Apolipoprotein C-I (APOC1), found in Eonycteris spelaea (Lesser dawn bat).